We begin with the raw amino-acid sequence, 77 residues long: Conotoxin Vc6c (77 aa).

The N-terminal stretch at 1-22 is a signal peptide; the sequence is MKLTCMVIVAVLFLTANTFVTA. Positions 23–51 are excised as a propeptide; sequence DDSGNGLENLFSKAHHEIKNPEASNLNKR. Disulfide bonds link Cys52–Cys67, Cys59–Cys71, and Cys66–Cys76.

As to expression, expressed by the venom duct.

It localises to the secreted. The polypeptide is Conotoxin Vc6c (Conus victoriae (Queen Victoria cone)).